We begin with the raw amino-acid sequence, 419 residues long: Putative L-glutamine:3-amino-2,3-dideoxy-scyllo-inosose aminotransferase (419 aa).

N6-(pyridoxal phosphate)lysine is present on Lys199.

Belongs to the DegT/DnrJ/EryC1 family. L-glutamine:2-deoxy-scyllo-inosose/scyllo-inosose aminotransferase subfamily. It depends on pyridoxal 5'-phosphate as a cofactor.

The catalysed reaction is 3-amino-2,3-dideoxy-scyllo-inosose + L-glutamine = 2-deoxystreptamine + 2-oxoglutaramate. It participates in metabolic intermediate biosynthesis; 2-deoxystreptamine biosynthesis; 2-deoxystreptamine from D-glucose 6-phosphate: step 4/4. It functions in the pathway antibiotic biosynthesis; kanamycin biosynthesis. In terms of biological role, catalyzes the transamination of 3-amino-2,3-dideoxy-scyllo-inosose (amino-DOI) into 2-deoxystreptamine (DOS). This chain is Putative L-glutamine:3-amino-2,3-dideoxy-scyllo-inosose aminotransferase (kanD), found in Streptomyces kanamyceticus.